Here is an 87-residue protein sequence, read N- to C-terminus: Small ribosomal subunit protein bS20 (87 aa).

Residues 1–22 (MANHKSALKRHKQSLKRAARNR) are disordered.

Belongs to the bacterial ribosomal protein bS20 family.

Binds directly to 16S ribosomal RNA. The protein is Small ribosomal subunit protein bS20 of Nitratidesulfovibrio vulgaris (strain DP4) (Desulfovibrio vulgaris).